Here is a 188-residue protein sequence, read N- to C-terminus: Elongation factor P (188 aa).

The protein belongs to the elongation factor P family.

The protein resides in the cytoplasm. The protein operates within protein biosynthesis; polypeptide chain elongation. Involved in peptide bond synthesis. Stimulates efficient translation and peptide-bond synthesis on native or reconstituted 70S ribosomes in vitro. Probably functions indirectly by altering the affinity of the ribosome for aminoacyl-tRNA, thus increasing their reactivity as acceptors for peptidyl transferase. This Christiangramia forsetii (strain DSM 17595 / CGMCC 1.15422 / KT0803) (Gramella forsetii) protein is Elongation factor P.